The primary structure comprises 144 residues: DNA polymerase III subunit chi (144 aa).

The protein belongs to the DNA polymerase III chi/HolC chain family. In terms of assembly, DNA polymerase III contains a core (composed of alpha, epsilon and theta chains) that associates with a tau subunit. This core dimerizes to form the POLIII' complex. PolIII' associates with the gamma complex (composed of gamma, delta, delta', psi and chi chains) and with the beta chain to form the complete DNA polymerase III complex. Interacts directly with the psi subunit (holD). The only subunit of the DNA polymerase III holoenzyme known to interact with single-stranded DNA binding protein (SSB), interacts directly with DNA helicase YoaA.

The enzyme catalyses DNA(n) + a 2'-deoxyribonucleoside 5'-triphosphate = DNA(n+1) + diphosphate. Functionally, part of the beta sliding clamp loading complex, which hydrolyzes ATP to load the beta clamp onto primed DNA to form the DNA replication pre-initiation complex. DNA polymerase III is a complex, multichain enzyme responsible for most of the replicative synthesis in bacteria. This DNA polymerase also exhibits 3' to 5' exonuclease activity. This subunit may stabilize YoaA and/or stimulate the helicase activity of YoaA. The chain is DNA polymerase III subunit chi (holC) from Haemophilus influenzae (strain ATCC 51907 / DSM 11121 / KW20 / Rd).